The sequence spans 95 residues: UPF0213 protein ESA_03545 (95 aa).

One can recognise a GIY-YIG domain in the interval 2-77; that stretch reads EEWFLYLIRC…KQLTKRQKEQ (76 aa).

This sequence belongs to the UPF0213 family.

The chain is UPF0213 protein ESA_03545 from Cronobacter sakazakii (strain ATCC BAA-894) (Enterobacter sakazakii).